The primary structure comprises 200 residues: Holliday junction branch migration complex subunit RuvA (200 aa).

Residues Met1 to Ser65 are domain I. The interval Ser66–Pro144 is domain II. The segment at Val145–Ser149 is flexible linker. Residues Thr150 to Ser200 are domain III.

This sequence belongs to the RuvA family. Homotetramer. Forms an RuvA(8)-RuvB(12)-Holliday junction (HJ) complex. HJ DNA is sandwiched between 2 RuvA tetramers; dsDNA enters through RuvA and exits via RuvB. An RuvB hexamer assembles on each DNA strand where it exits the tetramer. Each RuvB hexamer is contacted by two RuvA subunits (via domain III) on 2 adjacent RuvB subunits; this complex drives branch migration. In the full resolvosome a probable DNA-RuvA(4)-RuvB(12)-RuvC(2) complex forms which resolves the HJ.

Its subcellular location is the cytoplasm. The RuvA-RuvB-RuvC complex processes Holliday junction (HJ) DNA during genetic recombination and DNA repair, while the RuvA-RuvB complex plays an important role in the rescue of blocked DNA replication forks via replication fork reversal (RFR). RuvA specifically binds to HJ cruciform DNA, conferring on it an open structure. The RuvB hexamer acts as an ATP-dependent pump, pulling dsDNA into and through the RuvAB complex. HJ branch migration allows RuvC to scan DNA until it finds its consensus sequence, where it cleaves and resolves the cruciform DNA. This Chlamydia trachomatis serovar L2 (strain ATCC VR-902B / DSM 19102 / 434/Bu) protein is Holliday junction branch migration complex subunit RuvA.